A 318-amino-acid polypeptide reads, in one-letter code: MAPPNGTTNGETEVATQGSYTAVSTGRKTTMHRLIEEHGSVLMPGVQDALSAAVVEKTGFHAAFVSGYSVSAAMLGLPDFGLLTTTEVVEATRRITAAAPNLCVVVDGDTGGGGPLNVQRFIRELISAGAKGVFLEDQVWPKKCGHMRGKAVVPAEEHALKIAAAREAIGDSDFFLVARTDARAPHGLEEGIRRANLYKEAGADATFVEAPANVDELKEVSAKTKGLRIANMIEGGKTPLHTPEEFKEMGFHLIAHSLTAVYATARALVNIMKILKEKGTTRDDLDQMATFSEFNELISLESWYEMESKFKNFTPKAT.

Residues 1-3 (MAP) constitute a propeptide, removed in mature form. The segment at 1–24 (MAPPNGTTNGETEVATQGSYTAVS) is disordered. Residues D107, D109, and K142 each contribute to the Mg(2+) site.

It belongs to the isocitrate lyase/PEP mutase superfamily. In terms of assembly, homodimer and homotetramer formed by a dimer of homodimer. It depends on Mg(2+) as a cofactor. Mn(2+) is required as a cofactor. Requires Fe(2+) as cofactor. Co(2+) serves as cofactor. As to expression, accumulates in senescing flower petals.

The catalysed reaction is oxaloacetate + H2O = oxalate + acetate + H(+). Functionally, catalyzes cleavage of the C(2)-C(3) bond in oxaloacetate and in (2R)-alkyl malate derivatives to form oxalate and acetate, and alkyl carboxylates and R-ketocarboxylates, respectively. In Dianthus caryophyllus (Carnation), this protein is Petal death protein.